Here is a 501-residue protein sequence, read N- to C-terminus: Glycerol kinase (501 aa).

Thr14 serves as a coordination point for ADP. Positions 14, 15, and 16 each coordinate ATP. Thr14 contacts sn-glycerol 3-phosphate. Arg18 is a binding site for ADP. Sn-glycerol 3-phosphate contacts are provided by Arg84, Glu85, Tyr136, and Asp246. Glycerol contacts are provided by Arg84, Glu85, Tyr136, Asp246, and Gln247. 2 residues coordinate ADP: Thr268 and Gly311. Positions 268, 311, 315, and 412 each coordinate ATP. Residues Gly412 and Asn416 each coordinate ADP.

Belongs to the FGGY kinase family. As to quaternary structure, homotetramer and homodimer (in equilibrium).

The catalysed reaction is glycerol + ATP = sn-glycerol 3-phosphate + ADP + H(+). It functions in the pathway polyol metabolism; glycerol degradation via glycerol kinase pathway; sn-glycerol 3-phosphate from glycerol: step 1/1. With respect to regulation, activated by phosphorylation and inhibited by fructose 1,6-bisphosphate (FBP). In terms of biological role, key enzyme in the regulation of glycerol uptake and metabolism. Catalyzes the phosphorylation of glycerol to yield sn-glycerol 3-phosphate. The polypeptide is Glycerol kinase (Desulforamulus reducens (strain ATCC BAA-1160 / DSM 100696 / MI-1) (Desulfotomaculum reducens)).